Consider the following 31-residue polypeptide: MLTIISYFLFLIGALTLALVLFIGLNKIQLI.

The chain crosses the membrane as a helical span at residues 4–24 (IISYFLFLIGALTLALVLFIG).

The protein belongs to the PetL family. As to quaternary structure, the 4 large subunits of the cytochrome b6-f complex are cytochrome b6, subunit IV (17 kDa polypeptide, PetD), cytochrome f and the Rieske protein, while the 4 small subunits are PetG, PetL, PetM and PetN. The complex functions as a dimer.

It localises to the plastid. Its subcellular location is the chloroplast thylakoid membrane. Functionally, component of the cytochrome b6-f complex, which mediates electron transfer between photosystem II (PSII) and photosystem I (PSI), cyclic electron flow around PSI, and state transitions. PetL is important for photoautotrophic growth as well as for electron transfer efficiency and stability of the cytochrome b6-f complex. This chain is Cytochrome b6-f complex subunit 6, found in Marchantia polymorpha (Common liverwort).